We begin with the raw amino-acid sequence, 116 residues long: NADH-ubiquinone oxidoreductase chain 3 (116 aa).

3 helical membrane-spanning segments follow: residues 3–23 (LITTIITITITLSAVLATISF), 56–76 (FFLIAILFLLFDLEIALLLPL), and 85–105 (PALTLVWSTAVLALLTLGLIY).

It belongs to the complex I subunit 3 family.

The protein localises to the mitochondrion membrane. The catalysed reaction is a ubiquinone + NADH + 5 H(+)(in) = a ubiquinol + NAD(+) + 4 H(+)(out). In terms of biological role, core subunit of the mitochondrial membrane respiratory chain NADH dehydrogenase (Complex I) that is believed to belong to the minimal assembly required for catalysis. Complex I functions in the transfer of electrons from NADH to the respiratory chain. The immediate electron acceptor for the enzyme is believed to be ubiquinone. The polypeptide is NADH-ubiquinone oxidoreductase chain 3 (MT-ND3) (Oncorhynchus masou (Cherry salmon)).